Consider the following 394-residue polypeptide: ATP phosphoribosyltransferase regulatory subunit (394 aa).

The protein belongs to the class-II aminoacyl-tRNA synthetase family. HisZ subfamily. In terms of assembly, heteromultimer composed of HisG and HisZ subunits.

Its subcellular location is the cytoplasm. It functions in the pathway amino-acid biosynthesis; L-histidine biosynthesis; L-histidine from 5-phospho-alpha-D-ribose 1-diphosphate: step 1/9. Its function is as follows. Required for the first step of histidine biosynthesis. May allow the feedback regulation of ATP phosphoribosyltransferase activity by histidine. In Pseudomonas paraeruginosa (strain DSM 24068 / PA7) (Pseudomonas aeruginosa (strain PA7)), this protein is ATP phosphoribosyltransferase regulatory subunit.